The following is a 212-amino-acid chain: Phosphatidylserine decarboxylase proenzyme (212 aa).

The Schiff-base intermediate with substrate; via pyruvic acid role is filled by Ser182. Position 182 is a pyruvic acid (Ser); by autocatalysis (Ser182).

It belongs to the phosphatidylserine decarboxylase family. PSD-A subfamily. In terms of assembly, heterodimer of a large membrane-associated beta subunit and a small pyruvoyl-containing alpha subunit. Pyruvate is required as a cofactor. Is synthesized initially as an inactive proenzyme. Formation of the active enzyme involves a self-maturation process in which the active site pyruvoyl group is generated from an internal serine residue via an autocatalytic post-translational modification. Two non-identical subunits are generated from the proenzyme in this reaction, and the pyruvate is formed at the N-terminus of the alpha chain, which is derived from the carboxyl end of the proenzyme. The post-translation cleavage follows an unusual pathway, termed non-hydrolytic serinolysis, in which the side chain hydroxyl group of the serine supplies its oxygen atom to form the C-terminus of the beta chain, while the remainder of the serine residue undergoes an oxidative deamination to produce ammonia and the pyruvoyl prosthetic group on the alpha chain.

It is found in the cell membrane. The enzyme catalyses a 1,2-diacyl-sn-glycero-3-phospho-L-serine + H(+) = a 1,2-diacyl-sn-glycero-3-phosphoethanolamine + CO2. The protein operates within phospholipid metabolism; phosphatidylethanolamine biosynthesis; phosphatidylethanolamine from CDP-diacylglycerol: step 2/2. Functionally, catalyzes the formation of phosphatidylethanolamine (PtdEtn) from phosphatidylserine (PtdSer). The sequence is that of Phosphatidylserine decarboxylase proenzyme from Chlorobium limicola (strain DSM 245 / NBRC 103803 / 6330).